The primary structure comprises 165 residues: Shikimate kinase (165 aa).

An ATP-binding site is contributed by 12–17; the sequence is GCGKST. A Mg(2+)-binding site is contributed by serine 16. Aspartate 34, arginine 57, and glycine 79 together coordinate substrate. An ATP-binding site is contributed by arginine 116. Arginine 133 contributes to the substrate binding site.

This sequence belongs to the shikimate kinase family. In terms of assembly, monomer. Mg(2+) serves as cofactor.

Its subcellular location is the cytoplasm. The enzyme catalyses shikimate + ATP = 3-phosphoshikimate + ADP + H(+). The protein operates within metabolic intermediate biosynthesis; chorismate biosynthesis; chorismate from D-erythrose 4-phosphate and phosphoenolpyruvate: step 5/7. Functionally, catalyzes the specific phosphorylation of the 3-hydroxyl group of shikimic acid using ATP as a cosubstrate. In Clostridium botulinum (strain Eklund 17B / Type B), this protein is Shikimate kinase.